Here is a 433-residue protein sequence, read N- to C-terminus: Histidine--tRNA ligase (433 aa).

The protein belongs to the class-II aminoacyl-tRNA synthetase family. Homodimer.

It localises to the cytoplasm. It carries out the reaction tRNA(His) + L-histidine + ATP = L-histidyl-tRNA(His) + AMP + diphosphate + H(+). The polypeptide is Histidine--tRNA ligase (Azoarcus sp. (strain BH72)).